The chain runs to 236 residues: Chaperone protein TorD (236 aa).

The protein belongs to the TorD/DmsD family. TorD subfamily.

The protein localises to the cytoplasm. Involved in the biogenesis of TorA. Acts on TorA before the insertion of the molybdenum cofactor and, as a result, probably favors a conformation of the apoenzyme that is competent for acquiring the cofactor. In Colwellia psychrerythraea (strain 34H / ATCC BAA-681) (Vibrio psychroerythus), this protein is Chaperone protein TorD.